The sequence spans 497 residues: uncharacterized protein (497 aa).

Positions 58–79 are disordered; that stretch reads ISTRSFRNDGNDSDPQTLDPDA. Transmembrane regions (helical) follow at residues 86–106, 120–140, 155–175, 180–200, 222–242, 258–278, 309–329, 348–368, 378–398, 407–427, 438–458, and 468–488; these read IAFVLLNSILSDMSMSTALPI, FSGLVIGIPTMISLVCLYPML, FRPLIVSCISQIIGHLLYSLA, WLYLILIGRMCNGVGFTMFLY, LNILAQTVGFMAGSFLGGLLA, VGSWFMLFAWCIYGILLSIFF, FMLVFLSMVAFISYFNIAGYQ, GNFLSLSALVIAPLVFLSTFL, MLYGFILGILALVVHLVLDVL, FVLYSAMQFGFSIGSAPLISL, ILVGIIVQIGISAADTVGAIC, and VGFIALNLGIAVLVFIQLLFL.

This sequence belongs to the major facilitator superfamily.

It is found in the membrane. This is an uncharacterized protein from Schizosaccharomyces pombe (strain 972 / ATCC 24843) (Fission yeast).